The following is a 376-amino-acid chain: 26S proteasome non-ATPase regulatory subunit 4 (376 aa).

Residues 5 to 188 (STMVCVDNSE…LADALISSPI (184 aa)) form the VWFA domain. Lys-122 participates in a covalent cross-link: Glycyl lysine isopeptide (Lys-Gly) (interchain with G-Cter in SUMO2). Positions 197–262 (LGLGASDFEF…TEDSDDALLK (66 aa)) are interaction with UBQLN1. The region spanning 211-230 (SADPELALALRVSMEEQRQR) is the UIM 1 domain. Basic and acidic residues predominate over residues 224–237 (MEEQRQRQEEEARR). Positions 224 to 257 (MEEQRQRQEEEARRAAAASAAEAGIATPGTEDSD) are disordered. A phosphothreonine mark is found at Thr-250 and Thr-253. 2 positions are modified to phosphoserine: Ser-256 and Ala-259. Positions 282–301 (TEEEQIAYAMQMSLQGTEFS) constitute a UIM 2 domain. The disordered stretch occupies residues 355-376 (MGALASQATKDGKNDKKEEEKK). Ser-360 is modified (phosphoserine). A compositionally biased stretch (basic and acidic residues) spans 364-376 (KDGKNDKKEEEKK).

It belongs to the proteasome subunit S5A family. As to quaternary structure, component of the 19S proteasome regulatory particle complex. The 26S proteasome consists of a 20S core particle (CP) and two 19S regulatory subunits (RP). The regulatory particle is made of a lid composed of 9 subunits, a base containing 6 ATPases and few additional components including PSMD4. Interacts with NUB1. Interacts with SQSTM1. Interacts with UBQLN4. Interacts with UBE3A. Interacts with UBQLN1 (via ubiquitin-like domain). Interacts with DDI2. In terms of tissue distribution, isoform Rpn10A is ubiquitous whereas isoform Rpn10E is mostly expressed in the embryonic brain.

Component of the 26S proteasome, a multiprotein complex involved in the ATP-dependent degradation of ubiquitinated proteins. This complex plays a key role in the maintenance of protein homeostasis by removing misfolded or damaged proteins, which could impair cellular functions, and by removing proteins whose functions are no longer required. Therefore, the proteasome participates in numerous cellular processes, including cell cycle progression, apoptosis, or DNA damage repair. PSMD4 acts as an ubiquitin receptor subunit through ubiquitin-interacting motifs and selects ubiquitin-conjugates for destruction. Displays a preferred selectivity for longer polyubiquitin chains. This Mus musculus (Mouse) protein is 26S proteasome non-ATPase regulatory subunit 4 (Psmd4).